We begin with the raw amino-acid sequence, 916 residues long: Isoleucine--tRNA ligase (916 aa).

Residues 57–67 (PYANGNLHMGH) carry the 'HIGH' region motif. E554 is an L-isoleucyl-5'-AMP binding site. The 'KMSKS' region motif lies at 595 to 599 (KMSKS). Residue K598 coordinates ATP. Zn(2+) is bound by residues C885, C888, C905, and C908.

The protein belongs to the class-I aminoacyl-tRNA synthetase family. IleS type 1 subfamily. In terms of assembly, monomer. Zn(2+) serves as cofactor.

The protein resides in the cytoplasm. It carries out the reaction tRNA(Ile) + L-isoleucine + ATP = L-isoleucyl-tRNA(Ile) + AMP + diphosphate. Catalyzes the attachment of isoleucine to tRNA(Ile). As IleRS can inadvertently accommodate and process structurally similar amino acids such as valine, to avoid such errors it has two additional distinct tRNA(Ile)-dependent editing activities. One activity is designated as 'pretransfer' editing and involves the hydrolysis of activated Val-AMP. The other activity is designated 'posttransfer' editing and involves deacylation of mischarged Val-tRNA(Ile). This Staphylococcus epidermidis (strain ATCC 35984 / DSM 28319 / BCRC 17069 / CCUG 31568 / BM 3577 / RP62A) protein is Isoleucine--tRNA ligase (ileS).